The primary structure comprises 126 residues: uncharacterized protein (126 aa).

This is an uncharacterized protein from Bacillus subtilis (strain 168).